Here is a 436-residue protein sequence, read N- to C-terminus: MSVDWRTEIYSGDISLVEKLIKNKGNCINISVEETTTPLIDAIRTGNAKIVELFIKHGAQVNHVNTKIPNPLLTAIKIGSHDIVKLLLINGVDTSILPVPCINKEMIKTILDSGVKVNTKNAKSKTFLHYAIKNNDLEVIKMLFEYGADVNIKDDNGCYPIHIATRSNSYEIIKLLLEKGAYANVKDNYGNSPLHNAAKYGDYACIKLVLDHTNNISNKCNNGVTPLHNAILYNRSAVELLINNRSINDTDVDGYTPLHYALQPPCSIDIIDILLYNNADISIKDNNGRNPIDTAFKYINRDSVIKELLANAVLINEVGKLKDTTILEHKEIKDNTVFSNFVYECNEEIKKMKKTKCVGDYSMFDVYMIRYKHKYDGNKDSIKDYLRCLDDNSTRMLKTIDINEFPIYSMYLVRCLYEYGNILKEMGSCIHNRYKK.

ANK repeat units follow at residues 1-30 (MSVD…CINI), 34-63 (ETTT…QVNH), 67-96 (KIPN…DTSI), 98-119 (PVPC…KVNT), 123-152 (KSKT…DVNI), 156-185 (NGCY…YANV), 189-218 (YGNS…NISN), 222-252 (NGVT…DTDV), 253-283 (DGYT…DISI), and 287-317 (NGRN…LINE).

The protein is Putative ankyrin repeat protein FPV245 of Vertebrata (FPV).